Here is a 559-residue protein sequence, read N- to C-terminus: Extracellular matrix protein 1 (559 aa).

An N-terminal signal peptide occupies residues 1 to 19 (MGTVSRAALILACLALASA). Tandem repeats lie at residues 170-298 (HCQQ…RPDY) and 302-424 (PCPV…YPNY). Residues 170–424 (HCQQGRRGVW…FAHLAPYPNY (255 aa)) are 2 X approximate repeats. N-linked (GlcNAc...) asparagine glycosylation is present at asparagine 373. N-linked (GlcNAc...) (high mannose) asparagine glycans are attached at residues asparagine 463 and asparagine 535. The disordered stretch occupies residues 535 to 559 (NATGLGEQGPTRGTDANPAPGSKEE). Phosphoserine is present on serine 556.

As to quaternary structure, interacts (via C-terminus) with HSPG2 (via C-terminus). Interacts with EFEMP1/FBLN3 and LAMB3. Interacts with MMP9. In terms of tissue distribution, expressed in the surrounding connective tissues of developing long bones, but not in the cartilage. The long isoform is expressed in a number of tissues including liver, heart and lungs. The short isoform is expressed in skin and cartilage-containing tissues such as tail and front paw. No expression is found in brain.

It localises to the secreted. The protein localises to the extracellular space. Its subcellular location is the extracellular matrix. Its function is as follows. Involved in endochondral bone formation as negative regulator of bone mineralization. Stimulates the proliferation of endothelial cells and promotes angiogenesis. Inhibits MMP9 proteolytic activity. The sequence is that of Extracellular matrix protein 1 (Ecm1) from Mus musculus (Mouse).